The chain runs to 315 residues: MGLTDGVFLIVCGAQFTLGILXNGFIGLVNGRSWFKTKRMSLSDFIIATLALSRIILLCIILTDSFLIVFSVKEHDSGIIMQLIDVFWTFTNHLSIWFATCLGVLYCLKIASFSHPTFLWLKWRVSRVMVWMLLGALLLSCGSTASLINEFKLYSVLRGIEATRNVTEHFRKKRNEYYLIHVLGTLWYLPPLVVSLASYFLLIFSLGRHTRQMLQNSTSSRDPSTEAHKRAIRIILSFFFLFLLYFLAFLIASFGNFLPETKMAKMIGEVMTMFYPAGHSFIVILGNSKLKQTFVEMLRCESGHLKPGSKGPIFS.

The Extracellular portion of the chain corresponds to 1-5; it reads MGLTD. The helical transmembrane segment at 6 to 26 threads the bilayer; that stretch reads GVFLIVCGAQFTLGILXNGFI. At 27 to 41 the chain is on the cytoplasmic side; that stretch reads GLVNGRSWFKTKRMS. The helical transmembrane segment at 42-62 threads the bilayer; it reads LSDFIIATLALSRIILLCIIL. The Extracellular portion of the chain corresponds to 63-93; the sequence is TDSFLIVFSVKEHDSGIIMQLIDVFWTFTNH. Residues 94-114 form a helical membrane-spanning segment; it reads LSIWFATCLGVLYCLKIASFS. At 115-127 the chain is on the cytoplasmic side; sequence HPTFLWLKWRVSR. A helical membrane pass occupies residues 128–148; sequence VMVWMLLGALLLSCGSTASLI. Over 149-185 the chain is Extracellular; sequence NEFKLYSVLRGIEATRNVTEHFRKKRNEYYLIHVLGT. A glycan (N-linked (GlcNAc...) asparagine) is linked at asparagine 165. A helical transmembrane segment spans residues 186 to 206; it reads LWYLPPLVVSLASYFLLIFSL. At 207–233 the chain is on the cytoplasmic side; that stretch reads GRHTRQMLQNSTSSRDPSTEAHKRAIR. A helical membrane pass occupies residues 234 to 254; it reads IILSFFFLFLLYFLAFLIASF. Residues 255 to 265 are Extracellular-facing; sequence GNFLPETKMAK. A helical transmembrane segment spans residues 266–286; that stretch reads MIGEVMTMFYPAGHSFIVILG. At 287 to 315 the chain is on the cytoplasmic side; it reads NSKLKQTFVEMLRCESGHLKPGSKGPIFS.

This sequence belongs to the G-protein coupled receptor T2R family.

The protein resides in the membrane. Its function is as follows. Gustducin-coupled receptor implicated in the perception of bitter compounds in the oral cavity and the gastrointestinal tract. Signals through PLCB2 and the calcium-regulated cation channel TRPM5. The chain is Taste receptor type 2 member 3 (TAS2R3) from Papio hamadryas (Hamadryas baboon).